Consider the following 67-residue polypeptide: Sec-independent protein translocase protein TatA (67 aa).

Residues 1–21 (MFGIGIQELLVVLVLVLLVFG) form a helical membrane-spanning segment. Residues 46–67 (PDEIDITPGKKNGKTDKDDKQA) are disordered. Basic and acidic residues predominate over residues 58–67 (GKTDKDDKQA).

Belongs to the TatA/E family. The Tat system comprises two distinct complexes: a TatABC complex, containing multiple copies of TatA, TatB and TatC subunits, and a separate TatA complex, containing only TatA subunits. Substrates initially bind to the TatABC complex, which probably triggers association of the separate TatA complex to form the active translocon.

The protein resides in the cell inner membrane. Its function is as follows. Part of the twin-arginine translocation (Tat) system that transports large folded proteins containing a characteristic twin-arginine motif in their signal peptide across membranes. TatA could form the protein-conducting channel of the Tat system. The polypeptide is Sec-independent protein translocase protein TatA (Nitratidesulfovibrio vulgaris (strain DSM 19637 / Miyazaki F) (Desulfovibrio vulgaris)).